Consider the following 72-residue polypeptide: uncharacterized protein (72 aa).

This sequence belongs to the asfivirus I73R family.

The protein resides in the virion. This is an uncharacterized protein from African swine fever virus (isolate Warthog/Namibia/Wart80/1980) (ASFV).